The primary structure comprises 521 residues: Proactivator polypeptide-like 1 (521 aa).

The N-terminal stretch at 1-17 (MLCALLLLPSLLGATRA) is a signal peptide. Positions 18 to 59 (SPTSGPQECAKGSTVWCQDLQTAARCGAVGYCQGAVWNKPTA) are excised as a propeptide. Positions 19 to 59 (PTSGPQECAKGSTVWCQDLQTAARCGAVGYCQGAVWNKPTA) constitute a Saposin A-type 1 domain. 2 Saposin B-type domains span residues 60–144 (KSLP…EPLQ) and 180–258 (EGAL…EELG). 3 cysteine pairs are disulfide-bonded: Cys64/Cys140, Cys67/Cys134, and Cys95/Cys107. Positions 146–180 (HLATLRPLSKEDTFEAVAPFMANGPLTFHPRQAPE) are excised as a propeptide. 3 cysteine pairs are disulfide-bonded: Cys184-Cys254, Cys187-Cys248, and Cys213-Cys224. N-linked (GlcNAc...) asparagine glycosylation occurs at Asn201. Residues 259-288 (APARLTQVVAMDGVPSLELGLPRKQSEMQM) constitute a propeptide that is removed on maturation. 2 Saposin B-type domains span residues 290-370 (AGVT…GNRR) and 392-473 (QGSF…HGPR). 3 cysteine pairs are disulfide-bonded: Cys294/Cys366, Cys297/Cys360, and Cys325/Cys336. Asn311 carries N-linked (GlcNAc...) asparagine glycosylation. Residues 370 to 391 (RRARAVHDAYAIVPSPEWDAEN) constitute a propeptide that is removed on maturation. Intrachain disulfides connect Cys396/Cys469, Cys399/Cys463, and Cys427/Cys438. Residues 474–521 (TPLLGTDQCALGPSFWCRSQEAAKLCNAVQHCQKHVWKEMHLHAGEHA) constitute a propeptide that is removed on maturation. In terms of domain architecture, Saposin A-type 2 spans 475-515 (PLLGTDQCALGPSFWCRSQEAAKLCNAVQHCQKHVWKEMHL).

It localises to the secreted. In terms of biological role, may activate the lysosomal degradation of sphingolipids. The polypeptide is Proactivator polypeptide-like 1 (PSAPL1) (Homo sapiens (Human)).